A 390-amino-acid polypeptide reads, in one-letter code: Homoserine O-succinyltransferase (390 aa).

Residues 59 to 369 (NAVLVCHALN…PHGHDAFLLD (311 aa)) form the AB hydrolase-1 domain. Residue serine 165 is the Nucleophile of the active site. Residue arginine 235 coordinates substrate. Active-site residues include aspartate 330 and histidine 363. Aspartate 364 contacts substrate.

This sequence belongs to the AB hydrolase superfamily. MetX family. In terms of assembly, homodimer.

It localises to the cytoplasm. It carries out the reaction L-homoserine + succinyl-CoA = O-succinyl-L-homoserine + CoA. It functions in the pathway amino-acid biosynthesis; L-methionine biosynthesis via de novo pathway; O-succinyl-L-homoserine from L-homoserine: step 1/1. In terms of biological role, transfers a succinyl group from succinyl-CoA to L-homoserine, forming succinyl-L-homoserine. The protein is Homoserine O-succinyltransferase of Cupriavidus pinatubonensis (strain JMP 134 / LMG 1197) (Cupriavidus necator (strain JMP 134)).